The chain runs to 645 residues: Chaperone protein DnaK (645 aa).

At Thr-201 the chain carries Phosphothreonine; by autocatalysis. The span at 606 to 629 shows a compositional bias: low complexity; that stretch reads NTNNATAGDNNTTDTGSSSNSDGS. Residues 606–645 are disordered; it reads NTNNATAGDNNTTDTGSSSNSDGSKVVDSDYQEIDKKDGK. The segment covering 630-645 has biased composition (basic and acidic residues); sequence KVVDSDYQEIDKKDGK.

The protein belongs to the heat shock protein 70 family.

Its function is as follows. Acts as a chaperone. The protein is Chaperone protein DnaK of Ehrlichia ruminantium (strain Gardel).